A 113-amino-acid chain; its full sequence is Large ribosomal subunit protein bL19 (113 aa).

It belongs to the bacterial ribosomal protein bL19 family.

Functionally, this protein is located at the 30S-50S ribosomal subunit interface and may play a role in the structure and function of the aminoacyl-tRNA binding site. In Nocardia farcinica (strain IFM 10152), this protein is Large ribosomal subunit protein bL19.